The following is a 228-amino-acid chain: E3 ubiquitin-protein ligase RNF114 (228 aa).

The RING-type zinc finger occupies 29 to 68; the sequence is CPVCLEVYEKPVQVPCGHVFCSACLQECLKPKKPVCGVCR. The Zn(2+) site is built by cysteine 91 and cysteine 94. The C2HC RNF-type zinc-finger motif lies at 91–110; it reads CHGCRKNFFLSKIRAHVATC. Lysine 102 carries the N6-acetyllysine modification. 2 residues coordinate Zn(2+): histidine 106 and cysteine 110. Lysine 112 is subject to N6-acetyllysine.

In terms of assembly, interacts with XAF1, the interaction increases XAF1 stability and proapoptotic effects, and may regulate IFN signaling. Post-translationally, autoubiquitinated. Polyubiquitinated in the presence of E2 enzymes UBE2D1, UBE2D2 and UBE2D3, but only monoubiquitinated in the presence of UBE2E1.

It localises to the cytoplasm. It is found in the nucleus. It carries out the reaction S-ubiquitinyl-[E2 ubiquitin-conjugating enzyme]-L-cysteine + [acceptor protein]-L-lysine = [E2 ubiquitin-conjugating enzyme]-L-cysteine + N(6)-ubiquitinyl-[acceptor protein]-L-lysine.. Its pathway is protein modification; protein ubiquitination. Functionally, E3 ubiquitin-protein ligase that promotes the ubiquitination of various substrates. In turn, participates in the regulation of many biological processes including cell cycle, apoptosis, osteoclastogenesis as well as innate or adaptive immunity. Acts as negative regulator of NF-kappa-B-dependent transcription by promoting the ubiquitination and stabilization of the NF-kappa-B inhibitor TNFAIP3. May promote the ubiquitination of TRAF6 as well. Also acts as a negative regulator of T-cell activation. Inhibits cellular dsRNA responses and interferon production by targeting MAVS component for proteasomal degradation. Ubiquitinates the CDK inhibitor CDKN1A leading to its degradationand probably also CDKN1B and CDKN1C. This activity stimulates cell cycle G1-to-S phase transition and suppresses cellular senescence. May play a role in spermatogenesis. Inhibits classical swine fever virus replication by mediating 'K27'-linked ubiquitination of viral NS4B and inducing its degradation via the proteasome. The polypeptide is E3 ubiquitin-protein ligase RNF114 (RNF114) (Sus scrofa (Pig)).